Here is an 852-residue protein sequence, read N- to C-terminus: Bifunctional isopimaradiene synthase, chloroplastic (852 aa).

A chloroplast-targeting transit peptide spans 1-53 (HHLTANTQSIPHFSTTLNAGSSARKRRSLYLRWGKGSNKIIACVGEGATSVPY). K252 is a binding site for substrate. D385 and D387 together coordinate Mg(2+). The DXDD motif signature appears at 385-388 (DIDD). Residue K472 participates in substrate binding. 5 residues coordinate Mg(2+): D604, D608, N748, T752, and E756. The DDXXD motif signature appears at 604–608 (DDLYD).

The protein belongs to the terpene synthase family. Tpsd subfamily. The cofactor is Mg(2+).

The protein localises to the plastid. It localises to the chloroplast. The enzyme catalyses (2E,6E,10E)-geranylgeranyl diphosphate = (+)-copalyl diphosphate. It carries out the reaction (+)-copalyl diphosphate = isopimara-7,15-diene + diphosphate. Its pathway is terpene metabolism; oleoresin biosynthesis. In terms of biological role, involved in defensive oleoresin formation in conifers in response to insect attack or other injury. Involved in diterpene (C20) olefins biosynthesis. Bifunctional enzyme that catalyzes two sequential cyclizations of geranylgeranyl diphosphate (GGPP) to isopimara-7,15-diene. The protein is Bifunctional isopimaradiene synthase, chloroplastic (TPS-ISO) of Abies balsamea (Balsam fir).